We begin with the raw amino-acid sequence, 87 residues long: Probable Fe(2+)-trafficking protein (87 aa).

This sequence belongs to the Fe(2+)-trafficking protein family. As to quaternary structure, monomer.

In terms of biological role, could be a mediator in iron transactions between iron acquisition and iron-requiring processes, such as synthesis and/or repair of Fe-S clusters in biosynthetic enzymes. This is Probable Fe(2+)-trafficking protein from Buchnera aphidicola subsp. Baizongia pistaciae (strain Bp).